The sequence spans 332 residues: Ribosomal RNA small subunit methyltransferase H (332 aa).

S-adenosyl-L-methionine is bound by residues 36-38 (GGY), aspartate 54, phenylalanine 81, aspartate 102, and glutamine 109. The segment at 295–322 (PRARSAKLRGAERTESPAHAAGDLPGWP) is disordered.

It belongs to the methyltransferase superfamily. RsmH family.

Its subcellular location is the cytoplasm. The enzyme catalyses cytidine(1402) in 16S rRNA + S-adenosyl-L-methionine = N(4)-methylcytidine(1402) in 16S rRNA + S-adenosyl-L-homocysteine + H(+). Functionally, specifically methylates the N4 position of cytidine in position 1402 (C1402) of 16S rRNA. The protein is Ribosomal RNA small subunit methyltransferase H of Rhodopseudomonas palustris (strain ATCC BAA-98 / CGA009).